Reading from the N-terminus, the 307-residue chain is Nicotinamide/nicotinic acid mononucleotide adenylyltransferase 2 (307 aa).

S16 and F17 together coordinate NAD(+). ATP is bound at residue H24. NAD(+)-binding residues include W92 and T95. S-palmitoyl cysteine attachment occurs at residues C164 and C165. NAD(+) is bound by residues G200, D202, L212, W213, and R232. Position 271-274 (271-274 (TKSR)) interacts with ATP.

It belongs to the eukaryotic NMN adenylyltransferase family. As to quaternary structure, monomer. The cofactor is Mg(2+). Post-translationally, degraded in response to injured neurite. Degradation is caused by polyubiquitination by MYCBP2 after recognition by FBXO45. In terms of processing, palmitoylated; palmitoylation is required for membrane association. As to expression, expressed predominantly in the brain and nervous system.

The protein resides in the golgi apparatus membrane. Its subcellular location is the cytoplasmic vesicle membrane. The protein localises to the cytoplasm. It localises to the cell projection. It is found in the axon. It carries out the reaction beta-nicotinamide D-ribonucleotide + ATP + H(+) = diphosphate + NAD(+). The catalysed reaction is nicotinate beta-D-ribonucleotide + ATP + H(+) = deamido-NAD(+) + diphosphate. It participates in cofactor biosynthesis; NAD(+) biosynthesis; NAD(+) from nicotinamide D-ribonucleotide: step 1/1. The protein operates within cofactor biosynthesis; NAD(+) biosynthesis; deamido-NAD(+) from nicotinate D-ribonucleotide: step 1/1. Its activity is regulated as follows. Inhibited by P1-(adenosine-5')-P3-(nicotinamide-riboside-5')-triphosphate (Np3AD) and P1-(adenosine-5')-P4-(nicotinamide-riboside-5')-tetraphosphate (Np4AD). In terms of biological role, nicotinamide/nicotinate-nucleotide adenylyltransferase that acts as an axon maintenance factor. Axon survival factor required for the maintenance of healthy axons: acts by delaying Wallerian axon degeneration, an evolutionarily conserved process that drives the loss of damaged axons. Catalyzes the formation of NAD(+) from nicotinamide mononucleotide (NMN) and ATP. Can also use the deamidated form; nicotinic acid mononucleotide (NaMN) as substrate but with a lower efficiency. Cannot use triazofurin monophosphate (TrMP) as substrate. Also catalyzes the reverse reaction, i.e. the pyrophosphorolytic cleavage of NAD(+). For the pyrophosphorolytic activity prefers NAD(+), NADH and NaAD as substrates and degrades nicotinic acid adenine dinucleotide phosphate (NHD) less effectively. Fails to cleave phosphorylated dinucleotides NADP(+), NADPH and NaADP(+). Also acts as an activator of ADP-ribosylation by supporting the catalytic activity of PARP16 and promoting mono-ADP-ribosylation of ribosomes by PARP16. May be involved in the maintenance of axonal integrity. The protein is Nicotinamide/nicotinic acid mononucleotide adenylyltransferase 2 of Mus musculus (Mouse).